A 466-amino-acid polypeptide reads, in one-letter code: 3-isopropylmalate dehydratase large subunit (466 aa).

[4Fe-4S] cluster contacts are provided by C349, C410, and C413.

It belongs to the aconitase/IPM isomerase family. LeuC type 1 subfamily. As to quaternary structure, heterodimer of LeuC and LeuD. [4Fe-4S] cluster serves as cofactor.

The catalysed reaction is (2R,3S)-3-isopropylmalate = (2S)-2-isopropylmalate. It participates in amino-acid biosynthesis; L-leucine biosynthesis; L-leucine from 3-methyl-2-oxobutanoate: step 2/4. In terms of biological role, catalyzes the isomerization between 2-isopropylmalate and 3-isopropylmalate, via the formation of 2-isopropylmaleate. The polypeptide is 3-isopropylmalate dehydratase large subunit (Ruthia magnifica subsp. Calyptogena magnifica).